We begin with the raw amino-acid sequence, 164 residues long: Small ribosomal subunit protein uS5 (164 aa).

Residues L10 to V73 enclose the S5 DRBM domain.

This sequence belongs to the universal ribosomal protein uS5 family. As to quaternary structure, part of the 30S ribosomal subunit. Contacts proteins S4 and S8.

With S4 and S12 plays an important role in translational accuracy. Functionally, located at the back of the 30S subunit body where it stabilizes the conformation of the head with respect to the body. The polypeptide is Small ribosomal subunit protein uS5 (Streptococcus gordonii (strain Challis / ATCC 35105 / BCRC 15272 / CH1 / DL1 / V288)).